Here is a 336-residue protein sequence, read N- to C-terminus: Probable deoxyhypusine synthase (336 aa).

Catalysis depends on Lys308, which acts as the Nucleophile.

Belongs to the deoxyhypusine synthase family. NAD(+) serves as cofactor.

It carries out the reaction [eIF5A protein]-L-lysine + spermidine = [eIF5A protein]-deoxyhypusine + propane-1,3-diamine. It participates in protein modification; eIF5A hypusination. Functionally, catalyzes the NAD-dependent oxidative cleavage of spermidine and the subsequent transfer of the butylamine moiety of spermidine to the epsilon-amino group of a specific lysine residue of the eIF-5A precursor protein to form the intermediate deoxyhypusine residue. The polypeptide is Probable deoxyhypusine synthase (Pyrococcus furiosus (strain ATCC 43587 / DSM 3638 / JCM 8422 / Vc1)).